Consider the following 286-residue polypeptide: D-tagatose-1,6-bisphosphate aldolase subunit KbaY (286 aa).

D82 (proton donor) is an active-site residue. H83 and H180 together coordinate Zn(2+). G181 lines the dihydroxyacetone phosphate pocket. H208 is a Zn(2+) binding site. Residues 209–211 (GAS) and 230–233 (NVAT) contribute to the dihydroxyacetone phosphate site.

The protein belongs to the class II fructose-bisphosphate aldolase family. TagBP aldolase KbaY subfamily. Homotetramer. Forms a complex with KbaZ. Requires Zn(2+) as cofactor.

The catalysed reaction is D-tagatofuranose 1,6-bisphosphate = D-glyceraldehyde 3-phosphate + dihydroxyacetone phosphate. The protein operates within carbohydrate metabolism; D-tagatose 6-phosphate degradation; D-glyceraldehyde 3-phosphate and glycerone phosphate from D-tagatose 6-phosphate: step 2/2. Catalytic subunit of the tagatose-1,6-bisphosphate aldolase KbaYZ, which catalyzes the reversible aldol condensation of dihydroxyacetone phosphate (DHAP or glycerone-phosphate) with glyceraldehyde 3-phosphate (G3P) to produce tagatose 1,6-bisphosphate (TBP). Requires KbaZ subunit for full activity and stability. In Escherichia coli O127:H6 (strain E2348/69 / EPEC), this protein is D-tagatose-1,6-bisphosphate aldolase subunit KbaY.